Consider the following 115-residue polypeptide: Cycloviolacin-O13 (115 aa).

Residues 1–22 (MDAKKMFVALVLIATFALPSLA) form the signal peptide. A propeptide spanning residues 23 to 81 (TFEKDFITPETIQAILKKSAPLSNIMLEEDVINALLKSKTVISNPIIEEAFLKNSNGLN) is cleaved from the precursor. The segment at residues 82 to 111 (GIPCGESCVWIPCISAAIGCSCKSKVCYRN) is a cross-link (cyclopeptide (Gly-Asn)). Intrachain disulfides connect Cys85–Cys101, Cys89–Cys103, and Cys94–Cys108. Positions 112–115 (SLDN) are excised as a propeptide.

Post-translationally, cycloviolacin-O13 is a cyclic peptide. Expressed in leaves, petals, petioles, roots and runners (at protein level).

Probably participates in a plant defense mechanism. Has hemolytic activity. In Viola odorata (Sweet violet), this protein is Cycloviolacin-O13.